Consider the following 929-residue polypeptide: SCY1-like protein 2 (929 aa).

The Protein kinase domain occupies 32–327 (FDVGRHIASG…ADQMTKIPFF (296 aa)). One copy of the HEAT repeat lies at 443–479 (DEIKNSVLPMVYRALEAPSIQIQELCLNIIPTFANLI). Residues 661-701 (ESENKEDGLQNKHKRASLTLEEKQKLAKEQEQAQKLKSQQP) are a coiled coil. S677 bears the Phosphoserine mark. A compositionally biased stretch (basic and acidic residues) spans 684–694 (QKLAKEQEQAQ). Disordered stretches follow at residues 684–709 (QKLA…VHTP) and 906–929 (NFAQ…DLFG). Low complexity predominate over residues 695–705 (KLKSQQPLKPQ). The interval 699-929 (QQPLKPQVHT…ASNDLKDLFG (231 aa)) is necessary for interaction with AP2 complex and clathrin, interaction with clathrin is necessary for its targeting to the TGN and endosomal membranes. Residue T708 is modified to Phosphothreonine. Residues 912 to 922 (TTMTNSSSASN) show a composition bias toward polar residues.

Belongs to the protein kinase superfamily. As to quaternary structure, interacts with clathrin and AP2B1; the interaction mediates the association with the AP-2 complex. Could autophosphorylate in presence of poly-L-lysine.

The protein localises to the cytoplasmic vesicle. It is found in the clathrin-coated vesicle. The protein resides in the golgi apparatus. Its subcellular location is the trans-Golgi network membrane. It localises to the endosome membrane. Functionally, component of the AP2-containing clathrin coat that may regulate clathrin-dependent trafficking at plasma membrane, TGN and endosomal system. A possible serine/threonine-protein kinase toward the beta2-subunit of the plasma membrane adapter complex AP2 and other proteins in presence of poly-L-lysine has not been confirmed. By regulating the expression of excitatory receptors at synapses, plays an essential role in neuronal function and signaling and in brain development. The sequence is that of SCY1-like protein 2 from Homo sapiens (Human).